The chain runs to 99 residues: UPF0751 protein BCE_A0020 (99 aa).

It belongs to the UPF0751 family.

This Bacillus cereus (strain ATCC 10987 / NRS 248) protein is UPF0751 protein BCE_A0020.